We begin with the raw amino-acid sequence, 54 residues long: UPF0391 membrane protein Mpe_A2904 (54 aa).

2 consecutive transmembrane segments (helical) span residues 5 to 25 (AVVFFIIALIAAVFGFGGIAA) and 30 to 50 (IAKILFFVFVVLAVASFLFGL).

This sequence belongs to the UPF0391 family.

The protein resides in the cell membrane. The sequence is that of UPF0391 membrane protein Mpe_A2904 from Methylibium petroleiphilum (strain ATCC BAA-1232 / LMG 22953 / PM1).